Consider the following 120-residue polypeptide: uncharacterized protein (120 aa).

Residues 1–18 (MRSWIPLLVLFAVLAVFA) form the signal peptide. The interval 20–99 (AGKSSESDES…GDNRVKRDGL (80 aa)) is disordered.

This is an uncharacterized protein from Caenorhabditis elegans.